Reading from the N-terminus, the 161-residue chain is uncharacterized protein (161 aa).

Residues 1 to 27 (MKKIGLLFMLCLAALFTIGFPAQQADA) form the signal peptide.

Its subcellular location is the secreted. This is an uncharacterized protein from Bacillus subtilis (strain 168).